We begin with the raw amino-acid sequence, 211 residues long: FMN-dependent NADH:quinone oxidoreductase (211 aa).

Residues Ser-10 and 16-18 (STS) each bind FMN.

The protein belongs to the azoreductase type 1 family. In terms of assembly, homodimer. FMN is required as a cofactor.

The catalysed reaction is 2 a quinone + NADH + H(+) = 2 a 1,4-benzosemiquinone + NAD(+). The enzyme catalyses N,N-dimethyl-1,4-phenylenediamine + anthranilate + 2 NAD(+) = 2-(4-dimethylaminophenyl)diazenylbenzoate + 2 NADH + 2 H(+). In terms of biological role, quinone reductase that provides resistance to thiol-specific stress caused by electrophilic quinones. Also exhibits azoreductase activity. Catalyzes the reductive cleavage of the azo bond in aromatic azo compounds to the corresponding amines. This is FMN-dependent NADH:quinone oxidoreductase from Frankia casuarinae (strain DSM 45818 / CECT 9043 / HFP020203 / CcI3).